Reading from the N-terminus, the 538-residue chain is MLIPEPIQADFPWLSLSILFPIVGALIVPFIPDKGEGKEVRWYALIISLITFLITVAAYFKGFDPSLEGLQLYEKVSWLPDLGLTWSVGADGLSMPLILLTSFITSLAVLAAWPVSYKPKLFFFLILAMDGGQIAVFAVQDMLLFFLAWELELFPVYLFLAIWGGKKRQYAATKFIIYTAGSSLFILLAGLAMGFFQGGGVPDFGYTHLAQQNFGRGFQLLCYSGLLIAFGVKLPIVPLHTWLPDAHGEATAPVHMLLAGILLKMGGYALLRFNAQLLPDAHAQFAPLLIVLGVVNIIYAALTSFAQRNLKRKIAYSSISHMGFVLIGIGSFSSLGTSGAMLQMVSHGLIGASLFFLVGATYDRTHTLQLDEMGGIGQNMRIMFALWTACAFASLALPGMSGFISELMVFVGFVTDEVYTLPFRIVVASLAAIGVILTPIYLLSMLREIFFGKENAKLISKAKLVDAEPREIYIIACLLVPIIGIGLYPKIMTDTYISSIDGLVKRDLLAVERIRSDRATIMSNTSLSIGTIEAPLLD.

The next 14 helical transmembrane spans lie at phenylalanine 11–isoleucine 31, tyrosine 43–phenylalanine 63, methionine 95–valine 115, proline 119–valine 139, leucine 143–tryptophan 163, phenylalanine 175–phenylalanine 195, glycine 217–valine 237, threonine 251–leucine 271, phenylalanine 285–phenylalanine 305, isoleucine 314–serine 334, alanine 340–alanine 360, isoleucine 382–isoleucine 404, isoleucine 425–methionine 445, and isoleucine 472–methionine 492.

It belongs to the complex I subunit 4 family.

It is found in the cellular thylakoid membrane. It catalyses the reaction a plastoquinone + NADH + (n+1) H(+)(in) = a plastoquinol + NAD(+) + n H(+)(out). The enzyme catalyses a plastoquinone + NADPH + (n+1) H(+)(in) = a plastoquinol + NADP(+) + n H(+)(out). Its function is as follows. NDH-1 shuttles electrons from NAD(P)H, via FMN and iron-sulfur (Fe-S) centers, to quinones in the respiratory chain. The immediate electron acceptor for the enzyme in this species is believed to be plastoquinone. Couples the redox reaction to proton translocation (for every two electrons transferred, four hydrogen ions are translocated across the cytoplasmic membrane), and thus conserves the redox energy in a proton gradient. The sequence is that of NAD(P)H-quinone oxidoreductase chain 4 from Prochlorococcus marinus (strain NATL1A).